A 210-amino-acid chain; its full sequence is Thiamine-phosphate synthase (210 aa).

Residues 39–43 (QLREK) and N71 each bind 4-amino-2-methyl-5-(diphosphooxymethyl)pyrimidine. Residues D72 and D91 each contribute to the Mg(2+) site. Residue S110 participates in 4-amino-2-methyl-5-(diphosphooxymethyl)pyrimidine binding. 134 to 136 (TPT) provides a ligand contact to 2-[(2R,5Z)-2-carboxy-4-methylthiazol-5(2H)-ylidene]ethyl phosphate. Position 137 (K137) interacts with 4-amino-2-methyl-5-(diphosphooxymethyl)pyrimidine. G163 contributes to the 2-[(2R,5Z)-2-carboxy-4-methylthiazol-5(2H)-ylidene]ethyl phosphate binding site.

The protein belongs to the thiamine-phosphate synthase family. Requires Mg(2+) as cofactor.

It carries out the reaction 2-[(2R,5Z)-2-carboxy-4-methylthiazol-5(2H)-ylidene]ethyl phosphate + 4-amino-2-methyl-5-(diphosphooxymethyl)pyrimidine + 2 H(+) = thiamine phosphate + CO2 + diphosphate. The catalysed reaction is 2-(2-carboxy-4-methylthiazol-5-yl)ethyl phosphate + 4-amino-2-methyl-5-(diphosphooxymethyl)pyrimidine + 2 H(+) = thiamine phosphate + CO2 + diphosphate. The enzyme catalyses 4-methyl-5-(2-phosphooxyethyl)-thiazole + 4-amino-2-methyl-5-(diphosphooxymethyl)pyrimidine + H(+) = thiamine phosphate + diphosphate. Its pathway is cofactor biosynthesis; thiamine diphosphate biosynthesis; thiamine phosphate from 4-amino-2-methyl-5-diphosphomethylpyrimidine and 4-methyl-5-(2-phosphoethyl)-thiazole: step 1/1. Functionally, condenses 4-methyl-5-(beta-hydroxyethyl)thiazole monophosphate (THZ-P) and 2-methyl-4-amino-5-hydroxymethyl pyrimidine pyrophosphate (HMP-PP) to form thiamine monophosphate (TMP). This chain is Thiamine-phosphate synthase, found in Campylobacter jejuni subsp. jejuni serotype O:2 (strain ATCC 700819 / NCTC 11168).